The chain runs to 250 residues: Ditrans,polycis-undecaprenyl-diphosphate synthase ((2E,6E)-farnesyl-diphosphate specific) (250 aa).

Asp20 is an active-site residue. Asp20 is a binding site for Mg(2+). Substrate-binding positions include 21–24 (GNGR), Trp25, Arg33, His37, and 65–67 (SSE). Asn68 serves as the catalytic Proton acceptor. Residues Trp69, Arg71, Arg188, and 194-196 (RIS) each bind substrate. Glu207 provides a ligand contact to Mg(2+).

The protein belongs to the UPP synthase family. Homodimer. The cofactor is Mg(2+).

It carries out the reaction 8 isopentenyl diphosphate + (2E,6E)-farnesyl diphosphate = di-trans,octa-cis-undecaprenyl diphosphate + 8 diphosphate. Catalyzes the sequential condensation of isopentenyl diphosphate (IPP) with (2E,6E)-farnesyl diphosphate (E,E-FPP) to yield (2Z,6Z,10Z,14Z,18Z,22Z,26Z,30Z,34E,38E)-undecaprenyl diphosphate (di-trans,octa-cis-UPP). UPP is the precursor of glycosyl carrier lipid in the biosynthesis of bacterial cell wall polysaccharide components such as peptidoglycan and lipopolysaccharide. The sequence is that of Ditrans,polycis-undecaprenyl-diphosphate synthase ((2E,6E)-farnesyl-diphosphate specific) from Vibrio cholerae serotype O1 (strain ATCC 39315 / El Tor Inaba N16961).